Reading from the N-terminus, the 341-residue chain is S-adenosylmethionine:tRNA ribosyltransferase-isomerase (341 aa).

Belongs to the QueA family. As to quaternary structure, monomer.

The protein localises to the cytoplasm. It carries out the reaction 7-aminomethyl-7-carbaguanosine(34) in tRNA + S-adenosyl-L-methionine = epoxyqueuosine(34) in tRNA + adenine + L-methionine + 2 H(+). Its pathway is tRNA modification; tRNA-queuosine biosynthesis. Functionally, transfers and isomerizes the ribose moiety from AdoMet to the 7-aminomethyl group of 7-deazaguanine (preQ1-tRNA) to give epoxyqueuosine (oQ-tRNA). The chain is S-adenosylmethionine:tRNA ribosyltransferase-isomerase from Alkaliphilus metalliredigens (strain QYMF).